Here is a 453-residue protein sequence, read N- to C-terminus: Ribosomal protein uS12 methylthiotransferase RimO (453 aa).

One can recognise an MTTase N-terminal domain in the interval 9–124; the sequence is PKVGFVSLGC…VMEAVHTHLP (116 aa). [4Fe-4S] cluster contacts are provided by C18, C54, C83, C155, C159, and C162. Residues 141–382 enclose the Radical SAM core domain; the sequence is LTPKHYAYLK…MEVAERVSAR (242 aa). The TRAM domain maps to 385–453; the sequence is QRKVGKSLRV…ADGHDLWGEV (69 aa).

Belongs to the methylthiotransferase family. RimO subfamily. The cofactor is [4Fe-4S] cluster.

Its subcellular location is the cytoplasm. It catalyses the reaction L-aspartate(89)-[ribosomal protein uS12]-hydrogen + (sulfur carrier)-SH + AH2 + 2 S-adenosyl-L-methionine = 3-methylsulfanyl-L-aspartate(89)-[ribosomal protein uS12]-hydrogen + (sulfur carrier)-H + 5'-deoxyadenosine + L-methionine + A + S-adenosyl-L-homocysteine + 2 H(+). Functionally, catalyzes the methylthiolation of an aspartic acid residue of ribosomal protein uS12. The polypeptide is Ribosomal protein uS12 methylthiotransferase RimO (Ralstonia pickettii (strain 12J)).